The chain runs to 143 residues: MTDLEIYRKRLERIEELLSELSEYSGRGAIIIVEGKRDVLSLKRLGIEGNFELATHQSLFNFSEKIARLGNEVVILTDWDRRGDILAIKLSGYFQSFGLKPELEIRNKLRLISQKEIKDVESLYTYVSKLRLKTGYCSKRDFQ.

One can recognise a Toprim domain in the interval 28–109 (GAIIIVEGKR…KPELEIRNKL (82 aa)). E34, D78, and D80 together coordinate Mg(2+).

It belongs to the UPF0292 family. Mg(2+) serves as cofactor.

This is UPF0292 protein Mbar_A0484 from Methanosarcina barkeri (strain Fusaro / DSM 804).